The primary structure comprises 236 residues: Exosome complex component Rrp4 (236 aa).

The region spanning 64–133 (GDKVIGKIIE…EIKESWLTLK (70 aa)) is the S1 motif domain. A KH domain is found at 141 to 199 (EGGHMVLIHASRVPRVIGKGGGMVNMVKELTSTRIIIGQNGLIWIDGPIEGVTMAIAAI).

Belongs to the RRP4 family. In terms of assembly, component of the archaeal exosome complex. Forms a trimer of Rrp4 and/or Csl4 subunits. The trimer associates with a hexameric ring-like arrangement composed of 3 Rrp41-Rrp42 heterodimers.

It localises to the cytoplasm. Its function is as follows. Non-catalytic component of the exosome, which is a complex involved in RNA degradation. Increases the RNA binding and the efficiency of RNA degradation. Confers strong poly(A) specificity to the exosome. This Thermoplasma volcanium (strain ATCC 51530 / DSM 4299 / JCM 9571 / NBRC 15438 / GSS1) protein is Exosome complex component Rrp4.